Reading from the N-terminus, the 410-residue chain is D-3-phosphoglycerate dehydrogenase (410 aa).

NAD(+) contacts are provided by residues 162–163 (HI), Asp182, 239–241 (AAR), and Asp265. Arg241 is a catalytic residue. Glu270 is an active-site residue. His293 serves as the catalytic Proton donor. 293-296 (HIGG) is a binding site for NAD(+). The 70-residue stretch at 341–410 (RLLHIHENRP…DGTIRARVLY (70 aa)) folds into the ACT domain.

This sequence belongs to the D-isomer specific 2-hydroxyacid dehydrogenase family.

It carries out the reaction (2R)-3-phosphoglycerate + NAD(+) = 3-phosphooxypyruvate + NADH + H(+). The catalysed reaction is (R)-2-hydroxyglutarate + NAD(+) = 2-oxoglutarate + NADH + H(+). It functions in the pathway amino-acid biosynthesis; L-serine biosynthesis; L-serine from 3-phospho-D-glycerate: step 1/3. With respect to regulation, in bacteria displays feedback inhibition by L-serine. Functionally, catalyzes the reversible oxidation of 3-phospho-D-glycerate to 3-phosphonooxypyruvate, the first step of the phosphorylated L-serine biosynthesis pathway. Also catalyzes the reversible oxidation of 2-hydroxyglutarate to 2-oxoglutarate. In Haemophilus influenzae (strain ATCC 51907 / DSM 11121 / KW20 / Rd), this protein is D-3-phosphoglycerate dehydrogenase (serA).